A 93-amino-acid chain; its full sequence is MSEATVNDKKKKGIQKVRIGYVVSDKMQKTIVVELEDRNQHALYGKTIRTTSKVKVHDENETAGVGDRVRIEECRPLSANKHFRLVEILEKAK.

Belongs to the universal ribosomal protein uS17 family. Part of the 30S ribosomal subunit.

In terms of biological role, one of the primary rRNA binding proteins, it binds specifically to the 5'-end of 16S ribosomal RNA. The polypeptide is Small ribosomal subunit protein uS17 (Corynebacterium kroppenstedtii (strain DSM 44385 / JCM 11950 / CIP 105744 / CCUG 35717)).